The primary structure comprises 530 residues: Inactive ubiquitin carboxyl-terminal hydrolase 17-like protein 4 (530 aa).

A USP domain is found at 80 to 375 (AGLQNMGNTC…QAYVLFYIQK (296 aa)). Residues 382 to 392 (SESVSRGREPR) are compositionally biased toward basic and acidic residues. 2 disordered regions span residues 382 to 410 (SESVSRGREPRALGAEDTDRPATQGELKR) and 493 to 530 (NSTDQESMNTGTLASLQGRTRRSKGKNKHSKRSLLVCQ). The segment covering 495 to 510 (TDQESMNTGTLASLQG) has biased composition (polar residues). The segment covering 511-524 (RTRRSKGKNKHSKR) has biased composition (basic residues).

Belongs to the peptidase C19 family. USP17 subfamily.

The protein resides in the nucleus. It is found in the endoplasmic reticulum. The sequence is that of Inactive ubiquitin carboxyl-terminal hydrolase 17-like protein 4 (USP17L4) from Homo sapiens (Human).